Here is a 1199-residue protein sequence, read N- to C-terminus: Metabotropic glutamate receptor 1 (1199 aa).

Residues 1 to 18 (MVRLLLIFFPMIFLEMSI) form the signal peptide. At 19–592 (LPRMPDRKVL…VRYLEWSDIE (574 aa)) the chain is on the extracellular side. Cys67 and Cys109 are joined by a disulfide. Tyr74 lines the L-glutamate pocket. Asn98 is a glycosylation site (N-linked (GlcNAc...) asparagine). L-glutamate contacts are provided by residues Ser165 and 186–188 (SAT). N-linked (GlcNAc...) asparagine glycosylation occurs at Asn223. Tyr236 serves as a coordination point for L-glutamate. The cysteines at positions 289 and 291 are disulfide-linked. Asp318 provides a ligand contact to L-glutamate. Residues Cys378 and Cys394 are joined by a disulfide bond. A glycan (N-linked (GlcNAc...) asparagine) is linked at Asn397. Position 409 (Lys409) interacts with L-glutamate. A disulfide bridge connects residues Cys432 and Cys439. The N-linked (GlcNAc...) asparagine glycan is linked to Asn515. Residues 593–615 (SIIAIAFSCLGILVTLFVTLIFV) traverse the membrane as a helical segment. At 616–629 (LYRDTPVVKSSSRE) the chain is on the cytoplasmic side. Residues 630–650 (LCYIILAGIFLGYVCPFTLIA) form a helical membrane-spanning segment. At 651–658 (KPTTTSCY) the chain is on the extracellular side. Cys657 and Cys746 are disulfide-bonded. The helical transmembrane segment at 659–680 (LQRLLVGLSSAMCYSALVTKTN) threads the bilayer. The Cytoplasmic portion of the chain corresponds to 681–703 (RIARILAGSKKKICTRKPRFMSA). A helical transmembrane segment spans residues 704 to 727 (WAQVIIASILISVQLTLVVTLIIM). At 728-750 (EPPMPILSYPSIKEVYLICNTSN) the chain is on the extracellular side. The chain crosses the membrane as a helical span at residues 751-772 (LGVVAPVGYNGLLIMSCTYYAF). Topologically, residues 773-785 (KTRNVPANFNEAK) are cytoplasmic. The chain crosses the membrane as a helical span at residues 786–807 (YIAFTMYTTCIIWLAFVPIYFG). Topologically, residues 808–815 (SNYKIITT) are extracellular. A helical membrane pass occupies residues 816 to 840 (CFAVSLSVTVALGCMFTPKMYIIIA). The Cytoplasmic segment spans residues 841-1199 (KPERNVRSAF…RDYKQSSSTL (359 aa)). Residue Ser853 is modified to Phosphoserine. The residue at position 871 (Thr871) is a Phosphothreonine. Disordered stretches follow at residues 882–905 (GAGN…QAPK), 959–1036 (EEDN…QPKS), and 1056–1081 (HAVL…PPQH). The segment covering 885–895 (NANSNGKSVSW) has biased composition (polar residues). A phosphoserine mark is found at Ser894 and Ser969. Residues 1012-1033 (GLPPPLPQQQPQQPPPQQPPQQ) are compositionally biased toward pro residues. At Ser1098 the chain carries Phosphoserine. Positions 1120-1177 (EREGNTEEDELEEEEDLPTASKLTPEDSPALTPPSPFRDSVASGSSVPSSPVSESVLC) are disordered. Residues 1125 to 1136 (TEEDELEEEEDL) show a composition bias toward acidic residues. Residue Ser1147 is modified to Phosphoserine. Thr1151 carries the post-translational modification Phosphothreonine. Ser1154 carries the post-translational modification Phosphoserine. Over residues 1159–1175 (SVASGSSVPSSPVSESV) the composition is skewed to low complexity.

It belongs to the G-protein coupled receptor 3 family. As to quaternary structure, homodimer; disulfide-linked. The PPXXF motif binds HOMER1, HOMER2 and HOMER3. Interacts with TAMALIN. Interacts with RYR1, RYR2, ITPR1, SHANK1 and SHANK3. Interacts with SIAH1. In terms of tissue distribution, predominantly expressed in cerebellar Purkinje cells, CA2-CA3 pyramidal cells of the hippocampus, and mitral and tufted cells of the olfactory bulb.

It localises to the cell membrane. Its subcellular location is the postsynaptic cell membrane. The protein localises to the cell projection. It is found in the dendrite. Its function is as follows. G-protein coupled receptor for glutamate. Ligand binding causes a conformation change that triggers signaling via guanine nucleotide-binding proteins (G proteins) and modulates the activity of down-stream effectors. Signaling activates a phosphatidylinositol-calcium second messenger system. May participate in the central action of glutamate in the CNS, such as long-term potentiation in the hippocampus and long-term depression in the cerebellum. May function in the light response in the retina. Induces GRID1 and GRID2 cation-channel activation via GNAQ-PLC-PKC pathway in dopaminergic neurons and cerebellar Purkinje cell, respectively. This Rattus norvegicus (Rat) protein is Metabotropic glutamate receptor 1 (Grm1).